The following is a 370-amino-acid chain: 3 beta-hydroxysteroid dehydrogenase/Delta 5--&gt;4-isomerase (370 aa).

Tyrosine 158 (proton acceptor) is an active-site residue. Lysine 162 contributes to the NAD(+) binding site.

The protein belongs to the 3-beta-HSD family. In terms of assembly, monomer.

It is found in the cytoplasm. It catalyses the reaction a 3beta-hydroxy-Delta(5)-steroid + NAD(+) = a 3-oxo-Delta(5)-steroid + NADH + H(+). It carries out the reaction cholesterol + NAD(+) = cholest-5-en-3-one + NADH + H(+). The catalysed reaction is pregnenolone + NAD(+) = pregn-5-ene-3,20-dione + NADH + H(+). The enzyme catalyses 3beta-hydroxyandrost-5-en-17-one + NAD(+) = androst-5-ene-3,17-dione + NADH + H(+). It catalyses the reaction a 3-oxo-Delta(5)-steroid = a 3-oxo-Delta(4)-steroid. It carries out the reaction cholest-5-en-3-one = cholest-4-en-3-one. The catalysed reaction is pregn-5-ene-3,20-dione = progesterone. The enzyme catalyses androst-5-ene-3,17-dione = androst-4-ene-3,17-dione. The protein operates within lipid metabolism; steroid biosynthesis. 3-beta-HSD is a bifunctional enzyme, that catalyzes the oxidation and isomerization of cholesterol, pregnenolone, and dehydroepiandrosterone (DHEA) into cholest-4-en-3-one, progesterone, and androsterone, respectively. This Mycobacterium tuberculosis (strain CDC 1551 / Oshkosh) protein is 3 beta-hydroxysteroid dehydrogenase/Delta 5--&gt;4-isomerase.